Reading from the N-terminus, the 196-residue chain is MSRTASITRTTSETSIELMLDLDGTGNTDIATGIGFFDHMLTALGRHAMLDLIVRAEGDLHIDAHHTVEDVGIVLGQAIREALGDKRGITRFGFAATPMDEALCEAAIDLSGRGFLVFDVPFERPMLGDMDTQLVQEFFQALTANGGFALHLTRRAGHNAHHVAEAAFKAAARALRMAVEPDPRAAGAIPSTKGVL.

It belongs to the imidazoleglycerol-phosphate dehydratase family.

Its subcellular location is the cytoplasm. The enzyme catalyses D-erythro-1-(imidazol-4-yl)glycerol 3-phosphate = 3-(imidazol-4-yl)-2-oxopropyl phosphate + H2O. The protein operates within amino-acid biosynthesis; L-histidine biosynthesis; L-histidine from 5-phospho-alpha-D-ribose 1-diphosphate: step 6/9. The chain is Imidazoleglycerol-phosphate dehydratase from Acidiphilium cryptum (strain JF-5).